The sequence spans 254 residues: Coenzyme F420:L-glutamate ligase (254 aa).

GTP-binding positions include 11-14 (IPLI), 40-41 (ST), and Lys-45. Asp-109 provides a ligand contact to a divalent metal cation. Position 112 (Asn-112) interacts with GTP. A divalent metal cation is bound by residues Asp-150, Thr-151, and Glu-208. GTP is bound at residue 206 to 213 (MGEGAGGI).

Belongs to the CofE family. In terms of assembly, homodimer. It depends on Mg(2+) as a cofactor. Mn(2+) is required as a cofactor. K(+) serves as cofactor.

The catalysed reaction is oxidized coenzyme F420-0 + GTP + L-glutamate = oxidized coenzyme F420-1 + GDP + phosphate + H(+). It catalyses the reaction oxidized coenzyme F420-1 + GTP + L-glutamate = oxidized coenzyme F420-2 + GDP + phosphate + H(+). It participates in cofactor biosynthesis; coenzyme F420 biosynthesis. In terms of biological role, catalyzes the GTP-dependent successive addition of two or more gamma-linked L-glutamates to the L-lactyl phosphodiester of 7,8-didemethyl-8-hydroxy-5-deazariboflavin (F420-0) to form coenzyme F420-0-glutamyl-glutamate (F420-2) or polyglutamated F420 derivatives. This chain is Coenzyme F420:L-glutamate ligase, found in Methanosarcina mazei (strain ATCC BAA-159 / DSM 3647 / Goe1 / Go1 / JCM 11833 / OCM 88) (Methanosarcina frisia).